A 75-amino-acid polypeptide reads, in one-letter code: Large ribosomal subunit protein bL32c (75 aa).

Positions 49 to 75 (SPGPTTPIKPNPKKQTGRRPRSQRRRT) are disordered. Over residues 59–75 (NPKKQTGRRPRSQRRRT) the composition is skewed to basic residues.

This sequence belongs to the bacterial ribosomal protein bL32 family.

The protein resides in the plastid. The protein localises to the chloroplast. This chain is Large ribosomal subunit protein bL32c, found in Nephroselmis olivacea (Green alga).